Reading from the N-terminus, the 104-residue chain is UPF0147 protein MK1586 (104 aa).

This sequence belongs to the UPF0147 family.

The protein is UPF0147 protein MK1586 of Methanopyrus kandleri (strain AV19 / DSM 6324 / JCM 9639 / NBRC 100938).